A 479-amino-acid chain; its full sequence is MVSKDTGKCILTTSESEVEPAACLALEMKYALDPNRQIKKRNKALQVRFKDICEAQNEQRDTQLSSGQLGEKREAKPVSCRAAYRKYMTVPARRSIPNVTKSTGVQTSPDLKKCYQTFPLDRKKGNLKSLPAADPFKSQNNGFLTDAKEKNEAGPMEEARPCGAGRVHKTTALVFHSNQHMNTVDQPLGVNCTEPCKSPEPLSYGEAALQNSTRPPSEEPDYQLLGRAKQDRGRPNSEEPAPPALRRVFKTEVATVYAPALSARAPEPGLSDSAAASQWSLCPADDERRRATHLNGLQAPSETALACSPPMQCLSPECSEQPSQTHTPPGLGNQPSPTAVAAGEECQRIVPHTEVVDLKAQLQMMENLISSSQETIKVLLGVIQELEKGEAHREGLSYRTGQDTANCDTCRNSACIIYSVELDFKQQEDKLQPVLRKLHPIEETQVIPSPYSQETYSSTPKQKSKTESKKHGRWKLWFL.

Ser-177 bears the Phosphoserine mark. Disordered regions lie at residues 226 to 247 and 315 to 338; these read GRAKQDRGRPNSEEPAPPALRR and SPECSEQPSQTHTPPGLGNQPSPT. Basic and acidic residues predominate over residues 228 to 237; that stretch reads AKQDRGRPNS. Polar residues predominate over residues 318-337; the sequence is CSEQPSQTHTPPGLGNQPSP. Residues 353–379 adopt a coiled-coil conformation; it reads TEVVDLKAQLQMMENLISSSQETIKVL. The segment covering 449-461 has biased composition (polar residues); that stretch reads SPYSQETYSSTPK. The segment at 449–472 is disordered; that stretch reads SPYSQETYSSTPKQKSKTESKKHG.

This sequence belongs to the INSYN2 family. As to quaternary structure, interacts with GPHN.

It localises to the postsynaptic density. Functionally, component of the protein machinery at the inhibitory synapses, probably acting as a scaffold. Inhibitory synapses dampen neuronal activity through postsynaptic hyperpolarization. This synaptic inhibition is fundamental for the functioning of the central nervous system, shaping and orchestrating the flow of information through neuronal networks to generate a precise neural code. The sequence is that of Inhibitory synaptic factor 2A from Homo sapiens (Human).